A 153-amino-acid polypeptide reads, in one-letter code: Superoxide dismutase [Cu-Zn] (153 aa).

2 residues coordinate Cu cation: H45 and H47. Phosphothreonine is present on T53. A disulfide bridge links C56 with C145. Phosphoserine is present on S59. Position 62 (H62) interacts with Cu cation. Residues H62, H70, H79, and D82 each contribute to the Zn(2+) site. H119 contacts Cu cation.

It belongs to the Cu-Zn superoxide dismutase family. Homodimer. It depends on Cu cation as a cofactor. Requires Zn(2+) as cofactor.

It is found in the cytoplasm. It catalyses the reaction 2 superoxide + 2 H(+) = H2O2 + O2. Its function is as follows. Destroys radicals which are normally produced within the cells and which are toxic to biological systems. The chain is Superoxide dismutase [Cu-Zn] from Drosophila melanogaster (Fruit fly).